The primary structure comprises 534 residues: Phosphoenolpyruvate carboxykinase (ATP) (534 aa).

Arg-59, Tyr-200, and Lys-206 together coordinate substrate. ATP contacts are provided by residues Lys-206, His-225, and 242–250 (GLSGTGKTT). Residues Lys-206 and His-225 each coordinate Mn(2+). Mn(2+) is bound at residue Asp-263. ATP-binding positions include Glu-291, Arg-327, 443-444 (RI), and Thr-449. Substrate is bound at residue Arg-327.

The protein belongs to the phosphoenolpyruvate carboxykinase (ATP) family. Requires Mn(2+) as cofactor.

The protein localises to the cytoplasm. It carries out the reaction oxaloacetate + ATP = phosphoenolpyruvate + ADP + CO2. It functions in the pathway carbohydrate biosynthesis; gluconeogenesis. Its function is as follows. Involved in the gluconeogenesis. Catalyzes the conversion of oxaloacetate (OAA) to phosphoenolpyruvate (PEP) through direct phosphoryl transfer between the nucleoside triphosphate and OAA. The polypeptide is Phosphoenolpyruvate carboxykinase (ATP) (Agathobacter rectalis (strain ATCC 33656 / DSM 3377 / JCM 17463 / KCTC 5835 / VPI 0990) (Eubacterium rectale)).